Here is a 65-residue protein sequence, read N- to C-terminus: Large ribosomal subunit protein bL35 (65 aa).

Belongs to the bacterial ribosomal protein bL35 family.

This Phytoplasma australiense protein is Large ribosomal subunit protein bL35.